Consider the following 309-residue polypeptide: L-aminoadipate-semialdehyde dehydrogenase-phosphopantetheinyl transferase (309 aa).

CoA-binding positions include Arg-47, 86-91 (RTAKGK), and 108-111 (NISH). Residues Asp-129 and Glu-181 each coordinate Mg(2+). 181–185 (ESFIK) lines the CoA pocket. Ser-258 is subject to Phosphoserine.

It belongs to the P-Pant transferase superfamily. AcpS family. As to quaternary structure, monomer. Requires Mg(2+) as cofactor.

The protein resides in the cytoplasm. Its subcellular location is the cytosol. The enzyme catalyses apo-[ACP] + CoA = holo-[ACP] + adenosine 3',5'-bisphosphate + H(+). The catalysed reaction is apo-[ACP] + acetyl-CoA = acetyl-[ACP] + adenosine 3',5'-bisphosphate + H(+). In terms of biological role, catalyzes the post-translational modification of target proteins by phosphopantetheine. Can transfer the 4'-phosphopantetheine moiety from coenzyme A, regardless of whether the CoA is presented in the free thiol form or as an acetyl thioester, to a serine residue of a broad range of acceptors including the acyl carrier domain of FASN. The polypeptide is L-aminoadipate-semialdehyde dehydrogenase-phosphopantetheinyl transferase (AASDHPPT) (Pongo abelii (Sumatran orangutan)).